The primary structure comprises 174 residues: Pituitary tumor-transforming gene 1 protein-interacting protein (174 aa).

A signal peptide spans 1 to 29 (MAPANLGLTPHWVMLLGAVLLLLLSGASA). At 30 to 93 (QEPPRVGCSE…RWGVCWVNFE (64 aa)) the chain is on the extracellular side. Positions 36–89 (GCSEYTNRSCEECLRNVSCLWCNENKACMDYPVRKILPPASLCKLSSARWGVCW) constitute a PSI domain. N-linked (GlcNAc...) asparagine glycans are attached at residues N42 and N51. Residues 94–114 (ALIITMSVLGGSVLLGITVCC) traverse the membrane as a helical segment. At 115–174 (CYCCRRKKSRKPDKSDERAMREQEERRVRQEERRAEMKSRHDEIRKKYGLFKEQNPYEKF) the chain is on the cytoplasmic side. Residues 125 to 155 (KPDKSDERAMREQEERRVRQEERRAEMKSRH) are disordered. Residues 126 to 155 (PDKSDERAMREQEERRVRQEERRAEMKSRH) show a composition bias toward basic and acidic residues. The stretch at 127–163 (DKSDERAMREQEERRVRQEERRAEMKSRHDEIRKKYG) forms a coiled coil. Position 171 is a phosphotyrosine (Y171).

As to quaternary structure, interacts with PTTG1.

The protein resides in the cell membrane. It is found in the cytoplasm. The protein localises to the nucleus. May facilitate PTTG1 nuclear translocation. This Mus musculus (Mouse) protein is Pituitary tumor-transforming gene 1 protein-interacting protein (Pttg1ip).